We begin with the raw amino-acid sequence, 607 residues long: Developmental gene 1062 protein (607 aa).

Disordered regions lie at residues 62–84, 334–451, and 568–602; these read LQGQQQQQQQQQQNHSQQQHNNQ, ICDD…SNFQ, and DNNTQSQMNNSISVNNHHHHHHHQPNNSNLTNDLL. Positions 334 to 363 are enriched in low complexity; sequence ICDDSSNSSTPSLSSYSNGNNKYNNNNNDS. Residues 364–382 are compositionally biased toward acidic residues; that stretch reads SESDESDDDDNNDDDDNDS. Low complexity-rich tracts occupy residues 383–451 and 568–582; these read IDFN…SNFQ and DNNTQSQMNNSISVN.

The chain is Developmental gene 1062 protein (DG1062) from Dictyostelium discoideum (Social amoeba).